The sequence spans 507 residues: Phosphoprotein (507 aa).

The segment at M1 to A48 is interaction with N0. 4 disordered regions span residues S40–R98, G134–S174, N201–G231, and A251–D305. At S86 the chain carries Phosphoserine. Positions G134–D145 are enriched in low complexity. Acidic residues predominate over residues N146–T160. S151 is subject to Phosphoserine. The segment covering S260 to G270 has biased composition (low complexity). The segment covering A279 to K300 has biased composition (polar residues). The tract at residues G304–G376 is multimerization. Interaction with the L polymerase regions lie at residues S361–L377 and P396–L410. The x domain (XD) stretch occupies residues G457–K507. Positions A459–K507 are interaction with the nucleocapsid (N-RNA).

It belongs to the morbillivirus P protein family. In terms of assembly, homotetramer. Interacts (via multimerization domain and XD domain) with polymerase L; this interaction forms the polymerase L-P complex. Interacts (via N-terminus) with N0 (via Ncore); this interaction allows P to chaperon N0 to avoid N polymerization and non-specific RNA binding before encapsidation. Interacts (via C-terminus) with N-RNA template (via Ntail); this interaction maintains the P/L complex anchored to the nucleocapsid template during the sequential transcription. Interacts (via C-terminus) with protein C this interaction allows C to associate with the ribonucleocapsid. In terms of processing, phosphorylation on serines by host CK2 is necessary for the formation of viral factories.

Functionally, essential cofactor of the RNA polymerase L that plays a central role in the transcription and replication by forming the polymerase complex with RNA polymerase L and recruiting L to the genomic N-RNA template for RNA synthesis. Also plays a central role in the encapsidation of nascent RNA chains by forming the encapsidation complex with the nucleocapsid protein N (N-P complex). Acts as a chaperone for newly synthesized free N protein, so-called N0, allowing encapsidation of nascent RNA chains during replication. The nucleoprotein protein N prevents excessive phosphorylation of P, which leads to down-regulation of viral transcription/ replication. Participates, together with N, in the formation of viral factories (viroplasms), which are large inclusions in the host cytoplasm where replication takes place. In Homo sapiens (Human), this protein is Phosphoprotein (P/V).